Reading from the N-terminus, the 1130-residue chain is ABC transporter ATM1 (1130 aa).

The N-terminal 65 residues, 1 to 65 (MQPPTRAPFF…ESFHSSAFQL (65 aa)), are a transit peptide targeting the mitochondrion. Disordered stretches follow at residues 191–212 (DAWTSGCSGQTDNATASPCVRP), 276–315 (HHAPLSRHSLQSLPESRIRGGTVSRGDSPGSLTLSPRNMS), and 341–385 (STFS…TSSP). Composition is skewed to polar residues over residues 195–206 (SGCSGQTDNATA) and 305–315 (GSLTLSPRNMS). A helical transmembrane segment spans residues 406-426 (PNPTSLQLLFSLFPFLWPTAL). The segment covering 468–502 (PLSPSGASPSSGDTSLLASSGETSSSLSPSAAPAE) has biased composition (low complexity). The segment at 468-554 (PLSPSGASPS…AGKAGTSVGG (87 aa)) is disordered. Over residues 503–523 (GAREAGKSGESAGRERRDEGS) the composition is skewed to basic and acidic residues. Helical transmembrane passes span 574 to 594 (IVSVPLGVVCGFPVARIAATG), 653 to 673 (VLLFQMVPTALEFALVLYLLG), 678 to 698 (GPVACITSLTMAVYVAFTAAV), 761 to 781 (LAFLNFGQQLIFNVGVLGSLA), and 791 to 811 (LLPVGHIVLVSSLLLQLAVPL). The 237-residue stretch at 587–823 (VARIAATGFN…VGTIYRETSL (237 aa)) folds into the ABC transmembrane type-1 domain. In terms of domain architecture, ABC transporter spans 857–1111 (VAFENVRFAY…ERGLYRALWE (255 aa)). ATP is bound at residue 910-917 (GPSGVGKS).

It belongs to the ABC transporter superfamily. ABCB family. Heavy Metal importer (TC 3.A.1.210) subfamily. In terms of assembly, homodimer.

Its subcellular location is the mitochondrion membrane. Its function is as follows. Probably transports iron-sulfur clusters in an ATP-dependent manner. Plays a role in [Fe-S] proteins homeostasis. Required for optimal parasite growth and lytic cycle. In Toxoplasma gondii (strain ATCC 50611 / Me49), this protein is ABC transporter ATM1.